A 329-amino-acid polypeptide reads, in one-letter code: GTP 3',8-cyclase (329 aa).

Positions 8-234 constitute a Radical SAM core domain; it reads AFARKFYYLR…QLRQRSDGPA (227 aa). Arg17 provides a ligand contact to GTP. Residues Cys24 and Cys28 each coordinate [4Fe-4S] cluster. Tyr30 is a binding site for S-adenosyl-L-methionine. Residue Cys31 participates in [4Fe-4S] cluster binding. A GTP-binding site is contributed by Arg68. Residue Gly72 participates in S-adenosyl-L-methionine binding. Thr99 is a binding site for GTP. An S-adenosyl-L-methionine-binding site is contributed by Ser123. Lys160 is a GTP binding site. Met194 contacts S-adenosyl-L-methionine. Cys257 and Cys260 together coordinate [4Fe-4S] cluster. Position 262-264 (262-264) interacts with GTP; that stretch reads RLR. Cys274 serves as a coordination point for [4Fe-4S] cluster.

Belongs to the radical SAM superfamily. MoaA family. Monomer and homodimer. [4Fe-4S] cluster serves as cofactor.

It carries out the reaction GTP + AH2 + S-adenosyl-L-methionine = (8S)-3',8-cyclo-7,8-dihydroguanosine 5'-triphosphate + 5'-deoxyadenosine + L-methionine + A + H(+). Its pathway is cofactor biosynthesis; molybdopterin biosynthesis. In terms of biological role, catalyzes the cyclization of GTP to (8S)-3',8-cyclo-7,8-dihydroguanosine 5'-triphosphate. The sequence is that of GTP 3',8-cyclase from Escherichia coli O7:K1 (strain IAI39 / ExPEC).